Here is a 520-residue protein sequence, read N- to C-terminus: Intermediate filament protein ON3 (520 aa).

Low complexity predominate over residues 1 to 27 (MSYTKKTSYSVKSSSSGSVPRSFSSMS). The interval 1–33 (MSYTKKTSYSVKSSSSGSVPRSFSSMSYSGPSV) is disordered. Positions 1 to 108 (MSYTKKTSYS…DPNIQVVRTQ (108 aa)) are head. A coil 1A region spans residues 109–144 (EKEQMKSLNNRFASFIDKVRFLEQQNKMLETKWSLL). The region spanning 109-420 (EKEQMKSLNN…KLLEGEEDRL (312 aa)) is the IF rod domain. Positions 145–157 (QNQTATRSNIDAM) are linker 1. The interval 158-253 (FEAYINNLRR…QIFEEEIREL (96 aa)) is coil 1B. The linker 12 stretch occupies residues 254-273 (QSQIKDTSVVVEMDNSRNLD). A coil 2 region spans residues 274–420 (MDAIVAEVRA…KLLEGEEDRL (147 aa)). Residues 421–520 (LSGIKSVNIS…VSESSEVVQD (100 aa)) form a tail region.

This sequence belongs to the intermediate filament family.

In terms of biological role, one of the non-neuronal predominant intermediate filament proteins of the visual pathway. This chain is Intermediate filament protein ON3, found in Carassius auratus (Goldfish).